We begin with the raw amino-acid sequence, 190 residues long: Crossover junction endodeoxyribonuclease RuvC (190 aa).

Residues D8, E67, and D139 contribute to the active site. Mg(2+)-binding residues include D8, E67, and D139.

It belongs to the RuvC family. In terms of assembly, homodimer which binds Holliday junction (HJ) DNA. The HJ becomes 2-fold symmetrical on binding to RuvC with unstacked arms; it has a different conformation from HJ DNA in complex with RuvA. In the full resolvosome a probable DNA-RuvA(4)-RuvB(12)-RuvC(2) complex forms which resolves the HJ. The cofactor is Mg(2+).

Its subcellular location is the cytoplasm. It catalyses the reaction Endonucleolytic cleavage at a junction such as a reciprocal single-stranded crossover between two homologous DNA duplexes (Holliday junction).. Its function is as follows. The RuvA-RuvB-RuvC complex processes Holliday junction (HJ) DNA during genetic recombination and DNA repair. Endonuclease that resolves HJ intermediates. Cleaves cruciform DNA by making single-stranded nicks across the HJ at symmetrical positions within the homologous arms, yielding a 5'-phosphate and a 3'-hydroxyl group; requires a central core of homology in the junction. The consensus cleavage sequence is 5'-(A/T)TT(C/G)-3'. Cleavage occurs on the 3'-side of the TT dinucleotide at the point of strand exchange. HJ branch migration catalyzed by RuvA-RuvB allows RuvC to scan DNA until it finds its consensus sequence, where it cleaves and resolves the cruciform DNA. This chain is Crossover junction endodeoxyribonuclease RuvC, found in Haemophilus influenzae (strain PittEE).